The primary structure comprises 505 residues: Glutamyl-tRNA(Gln) amidotransferase subunit A, mitochondrial (505 aa).

Active-site charge relay system residues include lysine 76 and serine 158. Residue serine 182 is the Acyl-ester intermediate of the active site.

This sequence belongs to the amidase family. GatA subfamily. In terms of assembly, subunit of the heterotrimeric GatCAB amidotransferase (AdT) complex, composed of A, B and C subunits.

It is found in the mitochondrion. The catalysed reaction is L-glutamyl-tRNA(Gln) + L-glutamine + ATP + H2O = L-glutaminyl-tRNA(Gln) + L-glutamate + ADP + phosphate + H(+). Its function is as follows. Allows the formation of correctly charged Gln-tRNA(Gln) through the transamidation of misacylated Glu-tRNA(Gln) in the mitochondria. The reaction takes place in the presence of glutamine and ATP through an activated gamma-phospho-Glu-tRNA(Gln). This is Glutamyl-tRNA(Gln) amidotransferase subunit A, mitochondrial from Ixodes scapularis (Black-legged tick).